The chain runs to 129 residues: Small ribosomal subunit protein uS11 (129 aa).

It belongs to the universal ribosomal protein uS11 family. As to quaternary structure, part of the 30S ribosomal subunit. Interacts with proteins S7 and S18. Binds to IF-3.

Its function is as follows. Located on the platform of the 30S subunit, it bridges several disparate RNA helices of the 16S rRNA. Forms part of the Shine-Dalgarno cleft in the 70S ribosome. This is Small ribosomal subunit protein uS11 from Beijerinckia indica subsp. indica (strain ATCC 9039 / DSM 1715 / NCIMB 8712).